Reading from the N-terminus, the 296-residue chain is Cytidine deaminase (296 aa).

CMP/dCMP-type deaminase domains follow at residues Glu-47–Ser-167 and Asp-186–Glu-296. Residue Asn-88–Glu-90 participates in substrate binding. His-101 is a binding site for Zn(2+). Catalysis depends on Glu-103, which acts as the Proton donor. Zn(2+) is bound by residues Cys-128 and Cys-131.

It belongs to the cytidine and deoxycytidylate deaminase family. As to quaternary structure, homodimer. Requires Zn(2+) as cofactor.

It carries out the reaction cytidine + H2O + H(+) = uridine + NH4(+). The catalysed reaction is 2'-deoxycytidine + H2O + H(+) = 2'-deoxyuridine + NH4(+). This enzyme scavenges exogenous and endogenous cytidine and 2'-deoxycytidine for UMP synthesis. The polypeptide is Cytidine deaminase (Shewanella pealeana (strain ATCC 700345 / ANG-SQ1)).